The sequence spans 194 residues: Imidazoleglycerol-phosphate dehydratase (194 aa).

The protein belongs to the imidazoleglycerol-phosphate dehydratase family.

Its subcellular location is the cytoplasm. The enzyme catalyses D-erythro-1-(imidazol-4-yl)glycerol 3-phosphate = 3-(imidazol-4-yl)-2-oxopropyl phosphate + H2O. Its pathway is amino-acid biosynthesis; L-histidine biosynthesis; L-histidine from 5-phospho-alpha-D-ribose 1-diphosphate: step 6/9. The sequence is that of Imidazoleglycerol-phosphate dehydratase from Lactiplantibacillus plantarum (strain ATCC BAA-793 / NCIMB 8826 / WCFS1) (Lactobacillus plantarum).